A 337-amino-acid chain; its full sequence is 25S rRNA (adenine(2142)-N(1))-methyltransferase (337 aa).

Gly-180 and Asp-201 together coordinate S-adenosyl-L-methionine.

This sequence belongs to the BMT2 family.

Its subcellular location is the nucleus. The protein resides in the nucleolus. The catalysed reaction is adenosine(2142) in 25S rRNA + S-adenosyl-L-methionine = N(1)-methyladenosine(2142) in 25S rRNA + S-adenosyl-L-homocysteine + H(+). Its function is as follows. S-adenosyl-L-methionine-dependent methyltransferase that specifically methylates the N(1) position of adenine 2142 in 25S rRNA. N(1)-methyladenine(2142) in 25S rRNA is present in helix 65, a region that accounts for most of the intersubunit surface of the large subunit. The sequence is that of 25S rRNA (adenine(2142)-N(1))-methyltransferase from Saccharomyces cerevisiae (strain ATCC 204508 / S288c) (Baker's yeast).